We begin with the raw amino-acid sequence, 90 residues long: Major envelope protein (90 aa).

Residues 53-70 (AVSVVSWAVAAGLIGELI) traverse the membrane as a helical segment.

It is found in the virion membrane. In terms of biological role, essential for membrane formation. In Pseudomonas savastanoi pv. phaseolicola (Pseudomonas syringae pv. phaseolicola), this protein is Major envelope protein (P9).